The chain runs to 118 residues: Probable non-functional immunoglobulin lambda variable 2-33 (118 aa).

The signal sequence occupies residues 1–19 (MAWALLLLTLLTQGTGSWA). Residues 20–44 (QSALTQPPFVSGAPGQSVTISCTGT) are framework-1. In terms of domain architecture, Ig-like spans 34–118 (GQSVTISCTG…CSLYSSSYTF (85 aa)). Cys41 and Cys109 are oxidised to a cystine. The segment at 45–53 (SSDVGDYDH) is complementarity-determining-1. Residues 54-70 (VFWYQKRLSTTSRLLIY) form a framework-2 region. The interval 71–73 (NVN) is complementarity-determining-2. The segment at 74 to 109 (TRPSGISDLFSGSKSGNMASLTISGLKSEVEANYHC) is framework-3. The complementarity-determining-3 stretch occupies residues 110–118 (SLYSSSYTF).

As to quaternary structure, immunoglobulins are composed of two identical heavy chains and two identical light chains; disulfide-linked.

The protein resides in the secreted. It localises to the cell membrane. In terms of biological role, probable non-functional open reading frame (ORF) of V region of the variable domain of immunoglobulin light chains. Non-functional ORF generally cannot participate in the synthesis of a productive immunoglobulin chain due to altered V-(D)-J or switch recombination and/or splicing site (at mRNA level) and/or conserved amino acid change (protein level). Immunoglobulins, also known as antibodies, are membrane-bound or secreted glycoproteins produced by B lymphocytes. In the recognition phase of humoral immunity, the membrane-bound immunoglobulins serve as receptors which, upon binding of a specific antigen, trigger the clonal expansion and differentiation of B lymphocytes into immunoglobulins-secreting plasma cells. Secreted immunoglobulins mediate the effector phase of humoral immunity, which results in the elimination of bound antigens. The antigen binding site is formed by the variable domain of one heavy chain, together with that of its associated light chain. Thus, each immunoglobulin has two antigen binding sites with remarkable affinity for a particular antigen. The variable domains are assembled by a process called V-(D)-J rearrangement and can then be subjected to somatic hypermutations which, after exposure to antigen and selection, allow affinity maturation for a particular antigen. This is Probable non-functional immunoglobulin lambda variable 2-33 from Homo sapiens (Human).